Reading from the N-terminus, the 308-residue chain is Glutaminase (308 aa).

Substrate contacts are provided by Ser-66, Asn-117, Glu-161, Asn-168, Tyr-192, Tyr-244, and Val-262.

The protein belongs to the glutaminase family. In terms of assembly, homotetramer.

The enzyme catalyses L-glutamine + H2O = L-glutamate + NH4(+). The polypeptide is Glutaminase (Salmonella heidelberg (strain SL476)).